The chain runs to 387 residues: Phosphoglycerate kinase (387 aa).

Substrate contacts are provided by residues 21–23, arginine 36, 59–62, arginine 113, and arginine 146; these read DLN and HLGR. Residues lysine 197, glutamate 314, and 340–343 contribute to the ATP site; that span reads GGDT.

This sequence belongs to the phosphoglycerate kinase family. Monomer.

Its subcellular location is the cytoplasm. It catalyses the reaction (2R)-3-phosphoglycerate + ATP = (2R)-3-phospho-glyceroyl phosphate + ADP. It functions in the pathway carbohydrate degradation; glycolysis; pyruvate from D-glyceraldehyde 3-phosphate: step 2/5. The protein is Phosphoglycerate kinase of Aliivibrio fischeri (strain MJ11) (Vibrio fischeri).